The primary structure comprises 252 residues: Ribosomal RNA small subunit methyltransferase J (252 aa).

S-adenosyl-L-methionine-binding positions include 105–106 (RD), 121–122 (ER), and Asp175.

The protein belongs to the methyltransferase superfamily. RsmJ family.

The protein resides in the cytoplasm. The catalysed reaction is guanosine(1516) in 16S rRNA + S-adenosyl-L-methionine = N(2)-methylguanosine(1516) in 16S rRNA + S-adenosyl-L-homocysteine + H(+). Specifically methylates the guanosine in position 1516 of 16S rRNA. In Pasteurella multocida (strain Pm70), this protein is Ribosomal RNA small subunit methyltransferase J.